Reading from the N-terminus, the 513-residue chain is HMG box-containing protein 1 (513 aa).

Residues 151–181 form a disordered region; that stretch reads RPPPVSSAKSGPAFPHDHWKEETPVRHERAN. Residues 165–181 are compositionally biased toward basic and acidic residues; that stretch reads PHDHWKEETPVRHERAN. The region spanning 202 to 343 is the AXH domain; the sequence is WCNSWPSTVW…PPGHPDAINF (142 aa). The HMG box DNA-binding region spans 433–501; sequence CKRPMNAFML…EQKRLNPDCW (69 aa).

As to quaternary structure, binds TCF4. Binds RB1. Binds the second PAH repeat of SIN3A. Ubiquitinated by the CTLH E3 ubiquitin-protein ligase complex, leading to subsequent proteasomal degradation. In terms of tissue distribution, highly expressed in liver, adipose tissue, lung, brain, spleen, kidney, skeletal muscle and heart.

The protein localises to the nucleus. Its function is as follows. Transcriptional repressor that binds to the promoter region of target genes. Plays a role in the regulation of the cell cycle and of the Wnt pathway. Binds preferentially to the sequence 5'-TTCATTCATTCA-3'. Binding to the histone H1.0 promoter is enhanced by interaction with RB1. Disrupts the interaction between DNA and TCF4. In Rattus norvegicus (Rat), this protein is HMG box-containing protein 1 (Hbp1).